The primary structure comprises 397 residues: uncharacterized protein (397 aa).

A run of 4 helical transmembrane segments spans residues 62–79 (VLLFGILIFSIFVALIAI), 92–109 (WYGLLAFGVLTSLELVVT), 135–154 (VVFLPLICVYSLSILYSTLS), and 167–189 (AFLKTMLFTLLICSFILNFFPGI).

The protein resides in the cell membrane. This is an uncharacterized protein from Archaeoglobus fulgidus (strain ATCC 49558 / DSM 4304 / JCM 9628 / NBRC 100126 / VC-16).